The chain runs to 426 residues: Adenylosuccinate synthetase (426 aa).

GTP-binding positions include 14–20 (GDEGKGK) and 42–44 (GHT). Catalysis depends on D15, which acts as the Proton acceptor. 2 residues coordinate Mg(2+): D15 and G42. IMP is bound by residues 15-18 (DEGK), 40-43 (NAGH), T130, R144, Q224, T239, and R303. H43 serves as the catalytic Proton donor. Residue 299 to 305 (TVTKRPR) participates in substrate binding. GTP-binding positions include R305, 331 to 333 (LID), and 413 to 415 (SVG).

This sequence belongs to the adenylosuccinate synthetase family. As to quaternary structure, homodimer. The cofactor is Mg(2+).

The protein localises to the cytoplasm. It carries out the reaction IMP + L-aspartate + GTP = N(6)-(1,2-dicarboxyethyl)-AMP + GDP + phosphate + 2 H(+). The protein operates within purine metabolism; AMP biosynthesis via de novo pathway; AMP from IMP: step 1/2. Plays an important role in the de novo pathway of purine nucleotide biosynthesis. Catalyzes the first committed step in the biosynthesis of AMP from IMP. The polypeptide is Adenylosuccinate synthetase (Malacoplasma penetrans (strain HF-2) (Mycoplasma penetrans)).